Consider the following 308-residue polypeptide: Protein translocase subunit SecF (308 aa).

The next 6 helical transmembrane spans lie at 14-34, 134-154, 158-178, 185-205, 238-258, and 267-287; these read FFLLSGAITVAGVIVFALFGF, VYAVLAAAACIVVYIAIRFEF, ISGIIALLHDAFIVLAAFALL, TFVAALLTIVGYSINDTIVIF, SIRTVLTVLIAAVILYFFGGI, and LIIGLVSGAYSSIFIASPIWV.

It belongs to the SecD/SecF family. SecF subfamily. Forms a complex with SecD. Part of the essential Sec protein translocation apparatus which comprises SecA, SecYEG and auxiliary proteins SecDF. Other proteins may also be involved.

The protein resides in the cell membrane. Functionally, part of the Sec protein translocase complex. Interacts with the SecYEG preprotein conducting channel. SecDF uses the proton motive force (PMF) to complete protein translocation after the ATP-dependent function of SecA. In Alicyclobacillus acidocaldarius subsp. acidocaldarius (strain ATCC 27009 / DSM 446 / BCRC 14685 / JCM 5260 / KCTC 1825 / NBRC 15652 / NCIMB 11725 / NRRL B-14509 / 104-IA) (Bacillus acidocaldarius), this protein is Protein translocase subunit SecF.